We begin with the raw amino-acid sequence, 357 residues long: Glutamyl endopeptidase (357 aa).

Residues 1 to 29 (MKGKFLKVSSLFVATLTTATLVSSPAANA) form the signal peptide. Residues 30–68 (LSSKAMDNHPQQTQTDKQQTPKIQKGGNLKPLEQRERAN) constitute a propeptide that is removed on maturation. Residues 33 to 58 (KAMDNHPQQTQTDKQQTPKIQKGGNL) are disordered. Over residues 40–54 (QQTQTDKQQTPKIQK) the composition is skewed to low complexity. Active-site charge relay system residues include His119, Asp161, and Ser237. The disordered stretch occupies residues 282 to 357 (NFANDDHPNN…NNNSDNPDAA (76 aa)). 18 consecutive repeat copies span residues 289-291 (PNN), 292-294 (PDN), 295-297 (PDN), 298-300 (PNN), 301-303 (PDN), 304-306 (PNN), 307-309 (PDN), 310-312 (PNN), 313-315 (PDN), 316-318 (PDN), 319-321 (PNN), 322-324 (PDN), 325-327 (PNN), 328-330 (PDN), 331-333 (PNN), 337-339 (PNN), 340-342 (PNN), and 343-345 (PDN). The segment at 289–345 (PNNPDNPDNPNNPDNPNNPDNPNNPDNPDNPNNPDNPNNPDNPNNPDQPNNPNNPDN) is 18 X 3 AA repeats of P-[DN]-N. Residues 291-357 (NPDNPDNPNN…NNNSDNPDAA (67 aa)) are compositionally biased toward low complexity.

The protein belongs to the peptidase S1B family. Proteolytically cleaved by aureolysin (aur). This cleavage leads to the activation of SspA.

Its subcellular location is the secreted. The enzyme catalyses Preferential cleavage: Glu-|-Xaa, Asp-|-Xaa.. In terms of biological role, preferentially cleaves peptide bonds on the carboxyl-terminal side of aspartate and glutamate. Along with other extracellular proteases it is involved in colonization and infection of human tissues. Required for proteolytic maturation of thiol protease SspB and inactivation of SspC, an inhibitor of SspB. It is the most important protease for degradation of fibronectin-binding protein (FnBP) and surface protein A, which are involved in adherence to host cells. May also protect bacteria against host defense mechanism by cleaving the immunoglobulin classes IgG, IgA and IgM. May be involved in the stability of secreted lipases. The chain is Glutamyl endopeptidase (sspA) from Staphylococcus aureus (strain MRSA252).